A 338-amino-acid chain; its full sequence is Ketol-acid reductoisomerase (NADP(+)) (338 aa).

The region spanning 1–181 (MKVYYDKDCD…GGGRTGIIET (181 aa)) is the KARI N-terminal Rossmann domain. Residues 24 to 27 (YGSQ), Arg-47, Ser-50, Thr-52, and 82 to 85 (DEFQ) each bind NADP(+). His-107 is an active-site residue. Gly-133 provides a ligand contact to NADP(+). The region spanning 182 to 327 (TFKDETETDL…EQLRAMMPWI (146 aa)) is the KARI C-terminal knotted domain. Mg(2+) contacts are provided by Asp-190, Glu-194, Glu-226, and Glu-230. Ser-251 contacts substrate.

The protein belongs to the ketol-acid reductoisomerase family. It depends on Mg(2+) as a cofactor.

The catalysed reaction is (2R)-2,3-dihydroxy-3-methylbutanoate + NADP(+) = (2S)-2-acetolactate + NADPH + H(+). It carries out the reaction (2R,3R)-2,3-dihydroxy-3-methylpentanoate + NADP(+) = (S)-2-ethyl-2-hydroxy-3-oxobutanoate + NADPH + H(+). Its pathway is amino-acid biosynthesis; L-isoleucine biosynthesis; L-isoleucine from 2-oxobutanoate: step 2/4. It functions in the pathway amino-acid biosynthesis; L-valine biosynthesis; L-valine from pyruvate: step 2/4. Functionally, involved in the biosynthesis of branched-chain amino acids (BCAA). Catalyzes an alkyl-migration followed by a ketol-acid reduction of (S)-2-acetolactate (S2AL) to yield (R)-2,3-dihydroxy-isovalerate. In the isomerase reaction, S2AL is rearranged via a Mg-dependent methyl migration to produce 3-hydroxy-3-methyl-2-ketobutyrate (HMKB). In the reductase reaction, this 2-ketoacid undergoes a metal-dependent reduction by NADPH to yield (R)-2,3-dihydroxy-isovalerate. In Ectopseudomonas mendocina (strain ymp) (Pseudomonas mendocina), this protein is Ketol-acid reductoisomerase (NADP(+)).